The chain runs to 83 residues: NAD(P)H-quinone oxidoreductase subunit L, organellar chromatophore (83 aa).

2 helical membrane-spanning segments follow: residues 17–37 and 53–73; these read LLLA…LALY and LFVY…SPFL.

This sequence belongs to the complex I NdhL subunit family. NDH-1 can be composed of about 15 different subunits; different subcomplexes with different compositions have been identified which probably have different functions.

The protein localises to the plastid. It is found in the organellar chromatophore thylakoid membrane. It carries out the reaction a plastoquinone + NADH + (n+1) H(+)(in) = a plastoquinol + NAD(+) + n H(+)(out). The catalysed reaction is a plastoquinone + NADPH + (n+1) H(+)(in) = a plastoquinol + NADP(+) + n H(+)(out). Functionally, NDH-1 shuttles electrons from an unknown electron donor, via FMN and iron-sulfur (Fe-S) centers, to quinones in the respiratory and/or the photosynthetic chain. The immediate electron acceptor for the enzyme in this species is believed to be plastoquinone. Couples the redox reaction to proton translocation, and thus conserves the redox energy in a proton gradient. The sequence is that of NAD(P)H-quinone oxidoreductase subunit L, organellar chromatophore from Paulinella chromatophora.